We begin with the raw amino-acid sequence, 228 residues long: Ribulose-phosphate 3-epimerase (228 aa).

Serine 9 is a substrate binding site. The a divalent metal cation site is built by histidine 34, aspartate 36, histidine 68, and aspartate 177. The active-site Proton acceptor is aspartate 36. Substrate contacts are provided by residues histidine 68, 177 to 179 (DGG), and 199 to 200 (GS). Aspartate 177 (proton donor) is an active-site residue.

The protein belongs to the ribulose-phosphate 3-epimerase family. A divalent metal cation serves as cofactor.

The enzyme catalyses D-ribulose 5-phosphate = D-xylulose 5-phosphate. The protein operates within carbohydrate degradation. Catalyzes the reversible epimerization of D-ribulose 5-phosphate to D-xylulose 5-phosphate. The chain is Ribulose-phosphate 3-epimerase from Buchnera aphidicola subsp. Schizaphis graminum (strain Sg).